Here is a 186-residue protein sequence, read N- to C-terminus: Oligoribonuclease (186 aa).

The 164-residue stretch at 12 to 175 (LIWIDLEMTG…DDIKDSIKEL (164 aa)) folds into the Exonuclease domain. Tyr-133 is an active-site residue.

It belongs to the oligoribonuclease family.

The protein resides in the cytoplasm. Its function is as follows. 3'-to-5' exoribonuclease specific for small oligoribonucleotides. The sequence is that of Oligoribonuclease from Wigglesworthia glossinidia brevipalpis.